The chain runs to 739 residues: Ankyrin repeat and SAM domain-containing protein 6 (739 aa).

8 ANK repeats span residues 1–30 (MGASVLAMAARGGHTHTVKLLLENGAFVDD), 57–86 (LEVRALLAAAQHGQGAAVALLLDWGSDARV), 91–120 (TGWSALMLAAAGGSLSVCQQLVERGADPDH), 124–156 (LGNTALEVALQLRRRDVQKYLDNITSVRPRPDD), 158–188 (KKRPDVFHALKLGNAQLVKEIVEQDAAQVDV), 192–221 (DGASPLMMAAVSGQLEVVQLLVEKRADVDR), 226–255 (HGWTALMQATYHGNKEVVKFLLSQGADVQL), and 259–290 (NGYTAFDLVMLLNDPDTELVRLLASVCMLVDK). Over residues 295-305 (QRGKSALRRRA) the composition is skewed to basic residues. 2 disordered regions span residues 295–320 (QRGKSALRRRASAGTPSPPEDKTGLK) and 449–645 (LRDA…ITDE). The segment covering 462 to 478 (PGRSSAGSDTASISRVV) has biased composition (polar residues). 2 stretches are compositionally biased toward low complexity: residues 490–506 (GPSPSNSGSYNSAHSSG) and 582–592 (SSRSKSTSPTL). The segment covering 593-603 (TPSPSPTPAHT) has biased composition (pro residues). A compositionally biased stretch (low complexity) spans 604-641 (PAPAHTPAHRPTGASADSQGSASTQQRSRSSGGSSSGT). The SAM domain maps to 643–706 (TDEDELSGIL…LAAISELNAG (64 aa)).

It localises to the cell projection. It is found in the cilium. Functionally, required for renal function. In Danio rerio (Zebrafish), this protein is Ankyrin repeat and SAM domain-containing protein 6 (anks6).